Consider the following 248-residue polypeptide: Ubiquinone biosynthesis O-methyltransferase (248 aa).

The S-adenosyl-L-methionine site is built by Arg-41, Gly-72, Asp-93, and Met-136.

It belongs to the methyltransferase superfamily. UbiG/COQ3 family.

It carries out the reaction a 3-demethylubiquinol + S-adenosyl-L-methionine = a ubiquinol + S-adenosyl-L-homocysteine + H(+). It catalyses the reaction a 3-(all-trans-polyprenyl)benzene-1,2-diol + S-adenosyl-L-methionine = a 2-methoxy-6-(all-trans-polyprenyl)phenol + S-adenosyl-L-homocysteine + H(+). The protein operates within cofactor biosynthesis; ubiquinone biosynthesis. In terms of biological role, O-methyltransferase that catalyzes the 2 O-methylation steps in the ubiquinone biosynthetic pathway. This Rhizobium etli (strain ATCC 51251 / DSM 11541 / JCM 21823 / NBRC 15573 / CFN 42) protein is Ubiquinone biosynthesis O-methyltransferase.